A 1667-amino-acid polypeptide reads, in one-letter code: Androglobin (1667 aa).

The segment covering 1–11 has biased composition (basic residues); it reads MASKQTKKKEV. Disordered regions lie at residues 1 to 45, 347 to 387, and 540 to 566; these read MASK…KGKF, SLTT…KFSL, and GSDL…ITKA. In terms of domain architecture, Calpain catalytic spans 70-411; that stretch reads KDKTGKSPVF…SLSDCSSAIQ (342 aa). Positions 353-384 are enriched in basic and acidic residues; sequence APEKSDKVPKEKADARDIGKKRSKDGEKEKFK. Polar residues predominate over residues 554–566; it reads THSQTDLSQITKA. Residues 763–890 enclose the Globin; C-terminal part domain; the sequence is HICSMVSFVI…EEVSLVEWLD (128 aa). 2 residues coordinate heme b: Gln792 and His824. An IQ domain is found at 906–935; sequence EVAAAIKIQAMWRGTYVRLLMKARIPDTKE. The 33-residue stretch at 936–968 folds into the Globin; N-terminal part domain; it reads NISVADTLQKVWAVLEMNLEQYAVSLLRLMFKS. Disordered regions lie at residues 1297 to 1355 and 1420 to 1522; these read INLG…QQED and TSDA…RSPT. Residues 1301 to 1315 show a composition bias toward polar residues; it reads SPDSHTISEGQKSSV. Composition is skewed to basic and acidic residues over residues 1325–1340 and 1433–1450; these read EKSS…KQAP and TKPK…KEPN. Residues 1451 to 1468 show a composition bias toward polar residues; it reads SKNSAGSESKEMTQTGSG. Positions 1487–1498 are enriched in low complexity; sequence STSSESGGVSSP. Positions 1499–1511 are enriched in basic and acidic residues; the sequence is GKEEREQSTRKEN. Positions 1512 to 1522 are enriched in polar residues; that stretch reads IQTGPRTRSPT. Residues 1588–1629 are a coiled coil; sequence QEERLKLKDEVLDMYKEMQDSLDEARQKIFDIREEYRNKLLE. The interval 1646 to 1667 is disordered; that stretch reads KLETEKMTPAPDTQKKKKGKKK.

In the central section; belongs to the globin family. It in the N-terminal section; belongs to the peptidase C2 family. Interacts with septin SEPT10; contributes to in vitro proteolytic cleavage of SEPT10 in a calmodulin-dependent manner. Interacts with CFAP69. Interacts with SPEF2. May interact with calmodulin.

It localises to the cell projection. Its subcellular location is the cilium. The protein resides in the flagellum. Functionally, probable chimeric globin with a bis-histidyl six-coordinate heme-iron atom through which it could bind dioxygen, carbon monoxide and nitric oxide. Required for sperm flagellum formation and maturation of elongating spermatids, thus playing an essential role in male fertility. This Homo sapiens (Human) protein is Androglobin.